The chain runs to 197 residues: Putative early 21.8 kDa protein (197 aa).

Its function is as follows. This protein is required for viral late gene expression. The chain is Putative early 21.8 kDa protein (DA26) from Orgyia pseudotsugata (Douglas-fir tussock moth).